Reading from the N-terminus, the 240-residue chain is DNA repair protein RecO (240 aa).

It belongs to the RecO family.

Involved in DNA repair and RecF pathway recombination. The chain is DNA repair protein RecO from Actinobacillus pleuropneumoniae serotype 3 (strain JL03).